The following is a 176-amino-acid chain: NAD(P)H-quinone oxidoreductase subunit 6, chloroplastic (176 aa).

The next 5 membrane-spanning stretches (helical) occupy residues 10–30 (ILVL…VLLT), 33–53 (IYSA…YFLL), 60–80 (VAQL…AVMF), 95–115 (IGDG…MTTI), and 152–172 (FYLP…GAIT).

This sequence belongs to the complex I subunit 6 family. NDH is composed of at least 16 different subunits, 5 of which are encoded in the nucleus.

It localises to the plastid. Its subcellular location is the chloroplast thylakoid membrane. The enzyme catalyses a plastoquinone + NADH + (n+1) H(+)(in) = a plastoquinol + NAD(+) + n H(+)(out). The catalysed reaction is a plastoquinone + NADPH + (n+1) H(+)(in) = a plastoquinol + NADP(+) + n H(+)(out). Functionally, NDH shuttles electrons from NAD(P)H:plastoquinone, via FMN and iron-sulfur (Fe-S) centers, to quinones in the photosynthetic chain and possibly in a chloroplast respiratory chain. The immediate electron acceptor for the enzyme in this species is believed to be plastoquinone. Couples the redox reaction to proton translocation, and thus conserves the redox energy in a proton gradient. The polypeptide is NAD(P)H-quinone oxidoreductase subunit 6, chloroplastic (ndhG) (Saccharum hybrid (Sugarcane)).